Here is a 183-residue protein sequence, read N- to C-terminus: Cell division protein SepF (183 aa).

The disordered stretch occupies residues 149–183; that stretch reads SSEESAAPSVMAREEEATAPAAPSPAWGTQDAING.

Belongs to the SepF family. Homodimer. Interacts with FtsZ.

Its subcellular location is the cytoplasm. In terms of biological role, cell division protein that is part of the divisome complex and is recruited early to the Z-ring. Probably stimulates Z-ring formation, perhaps through the cross-linking of FtsZ protofilaments. Its function overlaps with FtsA. The polypeptide is Cell division protein SepF (Synechococcus sp. (strain RCC307)).